A 255-amino-acid chain; its full sequence is Uracil-DNA glycosylase (255 aa).

Asp-90 serves as the catalytic Proton acceptor.

Belongs to the uracil-DNA glycosylase (UDG) superfamily. UNG family.

The protein localises to the host nucleus. It catalyses the reaction Hydrolyzes single-stranded DNA or mismatched double-stranded DNA and polynucleotides, releasing free uracil.. In terms of biological role, excises uracil residues from the DNA which can arise as a result of misincorporation of dUMP residues by DNA polymerase or deamination of cytosines. Therefore may reduce deleterious uracil incorporation into the viral genome, particularly in terminally differentiated cells which lack DNA repair enzymes. In Equine herpesvirus 2 (strain 86/87) (EHV-2), this protein is Uracil-DNA glycosylase.